A 291-amino-acid polypeptide reads, in one-letter code: tRNA dimethylallyltransferase (291 aa).

9–16 (GTTASGKS) contacts ATP. Position 11–16 (11–16 (TASGKS)) interacts with substrate. The interval 34 to 37 (DSLA) is interaction with substrate tRNA.

The protein belongs to the IPP transferase family. As to quaternary structure, monomer. Requires Mg(2+) as cofactor.

The catalysed reaction is adenosine(37) in tRNA + dimethylallyl diphosphate = N(6)-dimethylallyladenosine(37) in tRNA + diphosphate. Catalyzes the transfer of a dimethylallyl group onto the adenine at position 37 in tRNAs that read codons beginning with uridine, leading to the formation of N6-(dimethylallyl)adenosine (i(6)A). This Campylobacter concisus (strain 13826) protein is tRNA dimethylallyltransferase.